The following is an 842-amino-acid chain: Outer membrane usher protein LpfC (842 aa).

The first 21 residues, 1–21, serve as a signal peptide directing secretion; the sequence is MTWTHLPLGNKTSRFTQSALA. A disulfide bridge links Cys819 with Cys841.

The protein belongs to the fimbrial export usher family.

The protein resides in the cell outer membrane. In terms of biological role, involved in the export and assembly of LpfA fimbrial subunits across the outer membrane. The polypeptide is Outer membrane usher protein LpfC (lpfC) (Salmonella typhimurium (strain LT2 / SGSC1412 / ATCC 700720)).